The following is an 835-amino-acid chain: Protein translocase subunit SecA 1 (835 aa).

ATP is bound by residues Q85, 103–107 (GEGKT), and D492. Residues 788–807 (VQGEAVHPSSDGEEAKKKPV) are disordered. The Zn(2+) site is built by C819, C821, C830, and C831.

This sequence belongs to the SecA family. Monomer and homodimer. Part of the essential Sec protein translocation apparatus which comprises SecA, SecYEG and auxiliary proteins SecDF. Other proteins may also be involved. It depends on Zn(2+) as a cofactor.

It localises to the cell membrane. The protein localises to the cytoplasm. It carries out the reaction ATP + H2O + cellular proteinSide 1 = ADP + phosphate + cellular proteinSide 2.. Its function is as follows. Part of the Sec protein translocase complex. Interacts with the SecYEG preprotein conducting channel. Has a central role in coupling the hydrolysis of ATP to the transfer of proteins into and across the cell membrane, serving as an ATP-driven molecular motor driving the stepwise translocation of polypeptide chains across the membrane. This is Protein translocase subunit SecA 1 from Bacillus thuringiensis subsp. konkukian (strain 97-27).